We begin with the raw amino-acid sequence, 1290 residues long: 1-phosphatidylinositol 4,5-bisphosphate phosphodiesterase gamma-1 (1290 aa).

Ala2 is subject to N-acetylalanine. Residues 27 to 142 form the PH 1 domain; the sequence is RSLEVGTVMT…WIKGLTWLME (116 aa). One can recognise an EF-hand domain in the interval 152–187; sequence QIERWLRKQFYSVDRNREDRISAKDLKNMLSQVNYR. 5 residues coordinate Ca(2+): Asp165, Asn167, Glu169, Arg171, and Asp176. Residues 320 to 464 enclose the PI-PLC X-box domain; that stretch reads ETMNNPLSHY…LKRKILIKHK (145 aa). Residues His335 and His380 contribute to the active site. The PH 2; first part domain maps to 489 to 523; it reads SIKNGILYLEDPVNHEWYPHYFVLTSSKIYYSEET. Tyr506 bears the Phosphotyrosine mark. Residues 522-546 form a disordered region; sequence ETSSDQGNEDEEEPKEASGSTELHS. 2 SH2 domains span residues 550–657 and 668–756; these read WFHG…SEPV and WYHA…RYPI. At Tyr771 the chain carries Phosphotyrosine; by SYK. Tyr775 carries the post-translational modification Phosphotyrosine. Tyr783 carries the phosphotyrosine; by ITK, SYK and TXK modification. The SH3 domain occupies 791 to 851; the sequence is TFKCAVKALF…PSNYVEEMIN (61 aa). The PH 2; second part domain maps to 895–931; that stretch reads FVFSISMPSVAQWSLDVAADSQEELQDWVKKIREVAQ. Residues 953-1070 form the PI-PLC Y-box domain; it reads LSELVVYCRP…GYVLQPSTMR (118 aa). Residue Tyr977 is modified to Phosphotyrosine. A C2 domain is found at 1071 to 1194; that stretch reads DEAFDPFDKS…TGYRAVPLKN (124 aa). Phosphoserine occurs at positions 1221, 1227, 1233, and 1248. Phosphotyrosine is present on Tyr1253. Phosphoserine is present on Ser1263. The disordered stretch occupies residues 1271 to 1290; sequence FDSRERRAPRRTRVNGDNRL.

Interacts with AGAP2 via its SH3 domain. Interacts (via SH2 domain) with RET. Interacts with FLT1 (tyrosine-phosphorylated). Interacts (via SH2 domain) with FGFR1, FGFR2, FGFR3 and FGFR4 (phosphorylated). Interacts with LAT (phosphorylated) upon TCR activation. Interacts (via SH3 domain) with the Pro-rich domain of TNK1. Associates with BLNK, VAV1, GRB2 and NCK1 in a B-cell antigen receptor-dependent fashion. Interacts with CBLB in activated T-cells; which inhibits phosphorylation. Interacts with SHB. Interacts (via SH3 domain) with the Arg/Gly-rich-flanked Pro-rich domains of KHDRBS1/SAM68. This interaction is selectively regulated by arginine methylation of KHDRBS1/SAM68. Interacts with INPP5D/SHIP1, THEMIS and CLNK. Interacts with AXL, FLT4 and KIT. Interacts with RALGPS1. Interacts (via the SH2 domains) with VIL1 (phosphorylated at C-terminus tyrosine phosphorylation sites). Interacts (via SH2 domain) with PDGFRA and PDGFRB (tyrosine phosphorylated). Interacts with PIP5K1C. Interacts with NTRK1 and NTRK2 (phosphorylated upon ligand-binding). Interacts with SYK; activates PLCG1. Interacts with GRB2, LAT and THEMIS upon TCR activation in thymocytes. Interacts with TESPA1; the association is increased with prolonged stimulation of the TCR and may facilitate the assembly of the LAT signalosome. Interacts (via C-terminal proline-rich domain (PRD)) with PLCG1 (via SH3 domain); this interaction leads to guanine nucleotide exchange from PlCG1 to DNM1 and enhances DNM1-dependent endocytosis. It depends on Ca(2+) as a cofactor. Post-translationally, ubiquitinated by CBLB in activated T-cells. Tyrosine phosphorylated in response to signaling via activated FLT3, KIT and PDGFRA. Tyrosine phosphorylated by activated FGFR1, FGFR2, FGFR3 and FGFR4. Tyrosine phosphorylated by activated FLT1 and KDR. Tyrosine phosphorylated by activated PDGFRB. The receptor-mediated activation of PLCG1 involves its phosphorylation by tyrosine kinases, in response to ligation of a variety of growth factor receptors and immune system receptors. For instance, SYK phosphorylates and activates PLCG1 in response to ligation of the B-cell receptor. May be dephosphorylated by PTPRJ. Phosphorylated by ITK and TXK on Tyr-783 upon TCR activation in T-cells.

Its subcellular location is the cell projection. It localises to the lamellipodium. It is found in the ruffle. It carries out the reaction a 1,2-diacyl-sn-glycero-3-phospho-(1D-myo-inositol-4,5-bisphosphate) + H2O = 1D-myo-inositol 1,4,5-trisphosphate + a 1,2-diacyl-sn-glycerol + H(+). It catalyses the reaction a 1,2-diacyl-sn-glycero-3-phospho-(1D-myo-inositol) + H2O = 1D-myo-inositol 1-phosphate + a 1,2-diacyl-sn-glycerol + H(+). With respect to regulation, activated by phosphorylation on tyrosine residues. In terms of biological role, mediates the production of the second messenger molecules diacylglycerol (DAG) and inositol 1,4,5-trisphosphate (IP3). Plays an important role in the regulation of intracellular signaling cascades. Becomes activated in response to ligand-mediated activation of receptor-type tyrosine kinases, such as PDGFRA, PDGFRB, EGFR, FGFR1, FGFR2, FGFR3 and FGFR4. Plays a role in actin reorganization and cell migration. Guanine nucleotide exchange factor that binds the GTPase DNM1 and catalyzes the dissociation of GDP, allowing a GTP molecule to bind in its place, therefore enhancing DNM1-dependent endocytosis. The protein is 1-phosphatidylinositol 4,5-bisphosphate phosphodiesterase gamma-1 of Rattus norvegicus (Rat).